We begin with the raw amino-acid sequence, 122 residues long: S-adenosylmethionine decarboxylase proenzyme (122 aa).

Catalysis depends on S69, which acts as the Schiff-base intermediate with substrate; via pyruvic acid. S69 bears the Pyruvic acid (Ser); by autocatalysis mark. Catalysis depends on H74, which acts as the Proton acceptor; for processing activity. The active-site Proton donor; for catalytic activity is C89.

The protein belongs to the prokaryotic AdoMetDC family. Type 1 subfamily. In terms of assembly, heterotetramer of two alpha and two beta chains arranged as a dimer of alpha/beta heterodimers. Requires pyruvate as cofactor. Is synthesized initially as an inactive proenzyme. Formation of the active enzyme involves a self-maturation process in which the active site pyruvoyl group is generated from an internal serine residue via an autocatalytic post-translational modification. Two non-identical subunits are generated from the proenzyme in this reaction, and the pyruvate is formed at the N-terminus of the alpha chain, which is derived from the carboxyl end of the proenzyme. The post-translation cleavage follows an unusual pathway, termed non-hydrolytic serinolysis, in which the side chain hydroxyl group of the serine supplies its oxygen atom to form the C-terminus of the beta chain, while the remainder of the serine residue undergoes an oxidative deamination to produce ammonia and the pyruvoyl group blocking the N-terminus of the alpha chain.

It catalyses the reaction S-adenosyl-L-methionine + H(+) = S-adenosyl 3-(methylsulfanyl)propylamine + CO2. The protein operates within amine and polyamine biosynthesis; S-adenosylmethioninamine biosynthesis; S-adenosylmethioninamine from S-adenosyl-L-methionine: step 1/1. In terms of biological role, catalyzes the decarboxylation of S-adenosylmethionine to S-adenosylmethioninamine (dcAdoMet), the propylamine donor required for the synthesis of the polyamines spermine and spermidine from the diamine putrescine. The protein is S-adenosylmethionine decarboxylase proenzyme of Sulfolobus acidocaldarius (strain ATCC 33909 / DSM 639 / JCM 8929 / NBRC 15157 / NCIMB 11770).